We begin with the raw amino-acid sequence, 243 residues long: UPF0173 metal-dependent hydrolase Caur_2542 (243 aa).

It belongs to the UPF0173 family.

This Chloroflexus aurantiacus (strain ATCC 29366 / DSM 635 / J-10-fl) protein is UPF0173 metal-dependent hydrolase Caur_2542.